A 414-amino-acid chain; its full sequence is Serine hydroxymethyltransferase (414 aa).

(6S)-5,6,7,8-tetrahydrofolate contacts are provided by residues leucine 118 and 122-124; that span reads GHL. Lysine 227 is subject to N6-(pyridoxal phosphate)lysine. Residues glutamate 240 and 350-352 contribute to the (6S)-5,6,7,8-tetrahydrofolate site; that span reads SPF.

The protein belongs to the SHMT family. Homodimer. The cofactor is pyridoxal 5'-phosphate.

The protein localises to the cytoplasm. The enzyme catalyses (6R)-5,10-methylene-5,6,7,8-tetrahydrofolate + glycine + H2O = (6S)-5,6,7,8-tetrahydrofolate + L-serine. The protein operates within one-carbon metabolism; tetrahydrofolate interconversion. It participates in amino-acid biosynthesis; glycine biosynthesis; glycine from L-serine: step 1/1. Its function is as follows. Catalyzes the reversible interconversion of serine and glycine with tetrahydrofolate (THF) serving as the one-carbon carrier. This reaction serves as the major source of one-carbon groups required for the biosynthesis of purines, thymidylate, methionine, and other important biomolecules. Also exhibits THF-independent aldolase activity toward beta-hydroxyamino acids, producing glycine and aldehydes, via a retro-aldol mechanism. This Bacillus cereus (strain ZK / E33L) protein is Serine hydroxymethyltransferase.